Here is a 376-residue protein sequence, read N- to C-terminus: Lysocardiolipin acyltransferase 1 (376 aa).

A helical membrane pass occupies residues 9-29 (FILFLFAGSFFGSIFMLGPIL). Asparagine 35 carries an N-linked (GlcNAc...) asparagine glycan. Residues 48 to 68 (ATWLTLPVALLETMFGVRVVI) form a helical membrane-spanning segment. Positions 85–90 (HRTRVD) match the HXXXXD motif motif. Lysine 183 is subject to N6-acetyllysine. 2 consecutive transmembrane segments (helical) span residues 309 to 329 (LLSI…IYLY) and 336 to 356 (FIIS…LEII).

Belongs to the 1-acyl-sn-glycerol-3-phosphate acyltransferase family. Widely expressed with highest expression in heart, liver and 12.5 dpc aorta-gonad-mesonephros and lower levels in the 16 dpc fetal liver and adult bone marrow. In bone marrow, highest levels are found in B-cells compared with whole bone marrow, T-cells, erythrocytes, and granulocytes.

The protein localises to the endoplasmic reticulum membrane. The catalysed reaction is a 1-acyl-sn-glycero-3-phosphate + an acyl-CoA = a 1,2-diacyl-sn-glycero-3-phosphate + CoA. It carries out the reaction a 1-acyl-sn-glycero-3-phospho-(1D-myo-inositol) + an acyl-CoA = a 1,2-diacyl-sn-glycero-3-phospho-(1D-myo-inositol) + CoA. The enzyme catalyses 1-acyl-sn-glycero-3-phospho-(1'-sn-glycerol) + an acyl-CoA = a 1,2-diacyl-sn-glycero-3-phospho-(1'-sn-glycerol) + CoA. It catalyses the reaction 1-hexadecanoyl-sn-glycero-3-phosphate + (9Z)-octadecenoyl-CoA = 1-hexadecanoyl-2-(9Z-octadecenoyl)-sn-glycero-3-phosphate + CoA. The catalysed reaction is 1-(9Z-octadecenoyl)-sn-glycero-3-phosphate + (9Z)-octadecenoyl-CoA = 1,2-di-(9Z-octadecenoyl)-sn-glycero-3-phosphate + CoA. It carries out the reaction 1-(9Z,12Z)-octadecadienoyl-sn-glycero-3-phosphate + (9Z)-octadecenoyl-CoA = 1-(9Z,12Z)-octadecadienoyl-2-(9Z)-octadecenoyl-sn-glycero-3-phosphate + CoA. The enzyme catalyses 1-(9Z,12Z,15Z)-octadecatrienoyl-sn-glycero-3-phosphate + (9Z)-octadecenoyl-CoA = 1-(9Z,12Z,15Z)-octadecatrienoyl-2-(9Z)-octadecenoyl-sn-glycero-3-phosphate + CoA. It catalyses the reaction 1-(9Z-octadecenoyl)-sn-glycero-3-phosphate + hexadecanoyl-CoA = 1-(9Z)-octadecenoyl-2-hexadecanoyl-sn-glycero-3-phosphate + CoA. The catalysed reaction is 1-(9Z-octadecenoyl)-sn-glycero-3-phosphate + octadecanoyl-CoA = 1-(9Z-octadecenoyl)-2-octadecanoyl-sn-glycero-3-phosphate + CoA. It carries out the reaction 1-acyl-sn-glycero-3-phospho-(1'-sn-glycerol) + (9Z)-octadecenoyl-CoA = 1-acyl-2-(9Z-octadecenoyl)-sn-glycero-3-phospho-(1'-sn-glycerol) + CoA. The enzyme catalyses a 1-acyl-sn-glycero-3-phospho-(1D-myo-inositol) + (9Z)-octadecenoyl-CoA = a 1-acyl-2-(9Z-octadecenoyl)-sn-glycero-3-phospho-(1D-myo-inositol) + CoA. It catalyses the reaction 1-hexadecanoyl-sn-glycero-3-phospho-(1D-myo-inositol) + hexadecanoyl-CoA = 1,2-dihexadecanoyl-sn-glycero-3-phospho-(1D-myo-inositol) + CoA. The catalysed reaction is 1-hexadecanoyl-sn-glycero-3-phospho-(1D-myo-inositol) + octadecanoyl-CoA = 1-hexadecanoyl-2-octadecanoyl-sn-glycero-3-phospho-(1D-myo-inositol) + CoA. It carries out the reaction 1-hexadecanoyl-sn-glycero-3-phospho-(1D-myo-inositol) + (9Z)-octadecenoyl-CoA = 1-hexadecanoyl-2-(9Z-octadecenoyl)-sn-glycero-3-phospho-(1D-myo-inositol) + CoA. The enzyme catalyses 1-hexadecanoyl-sn-glycero-3-phospho-(1D-myo-inositol) + (9Z,12Z)-octadecadienoyl-CoA = 1-hexadecanoyl-2-(9Z,12Z-octadecadienoyl)-sn-glycero-3-phospho-(1D-myo-inositol) + CoA. It catalyses the reaction 1-hexadecanoyl-sn-glycero-3-phospho-(1D-myo-inositol) + (5Z,8Z,11Z,14Z)-eicosatetraenoyl-CoA = 1-hexadecanoyl-2-(5Z,8Z,11Z,14Z-eicosatetraenoyl)-sn-glycero-3-phospho-D-myo-inositol + CoA. The catalysed reaction is 1-hexadecanoyl-sn-glycero-3-phospho-(1'-sn-glycerol) + hexadecanoyl-CoA = 1,2-dihexadecanoyl-sn-glycero-3-phospho-(1'-sn-glycerol) + CoA. It carries out the reaction 1-hexadecanoyl-sn-glycero-3-phospho-(1'-sn-glycerol) + octadecanoyl-CoA = 1-hexadecanoyl-2-octadecanoyl-sn-glycero-3-phospho-(1'-sn-glycerol) + CoA. The enzyme catalyses 1-hexadecanoyl-sn-glycero-3-phospho-(1'-sn-glycerol) + (9Z)-octadecenoyl-CoA = 1-hexadecanoyl-2-(9Z-octadecenoyl)-sn-glycero-3-phospho-(1'-sn-glycerol) + CoA. It catalyses the reaction 1-hexadecanoyl-sn-glycero-3-phospho-(1'-sn-glycerol) + (9Z,12Z)-octadecadienoyl-CoA = 1-hexadecanoyl-2-(9Z,12Z-octadecadienoyl)-sn-glycero-3-phospho-(1'-sn-glycerol) + CoA. The catalysed reaction is 1-tetradecanoyl-sn-glycero-3-phospho-(1'-sn-glycerol) + (9Z)-octadecenoyl-CoA = 1-tetradecanoyl-2-(9Z-octadecenoyl)-sn-glycero-3-phospho-(1'-sn-glycerol) + CoA. It carries out the reaction 1-octadecanoyl-sn-glycero-3-phospho-(1'-sn-glycerol) + (9Z)-octadecenoyl-CoA = 1-octadecanoyl-2-(9Z-octadecenoyl)-sn-glycero-3-phospho-(1'-sn-glycerol) + CoA. The enzyme catalyses 1-(9Z-octadecenoyl)-sn-glycero-3-phospho-(1'-sn-glycerol) + (9Z)-octadecenoyl-CoA = 1,2-di-(9Z-octadecenoyl)-sn-glycero-3-phospho-(1'-sn-glycerol) + CoA. It catalyses the reaction 1-hexadecanoyl-sn-glycero-3-phospho-(1D-myo-inositol) + dodecanoyl-CoA = 1-hexadecanoyl-2-dodecanoyl-sn-glycero-3-phospho-(1D-myo-inositol) + CoA. The catalysed reaction is 1',3'-bis-[1-acyl-sn-glycero-3-phospho]-glycerol + (9Z)-octadecenoyl-CoA = 1'-[1-acyl-2-(9Z)-octadecenoyl-sn-glycero-3-phospho],3'-[1-acyl,2-hydroxy-sn-glycero-3-phospho]-glycerol + CoA. It carries out the reaction 1'-[1,2-diacyl-sn-glycero-3-phospho],3'-[1-acyl-sn-glycero-3-phospho]-glycerol + (9Z)-octadecenoyl-CoA = 1'-[1,2-diacyl-sn-glycero-3-phospho],3'-[1-acyl,2-(9Z)-octadecenoyl-sn-glycero-3-phospho]-glycerol + CoA. The enzyme catalyses 1'-[1,2-diacyl-sn-glycero-3-phospho],3'-[1-acyl-sn-glycero-3-phospho]-glycerol + (9Z,12Z)-octadecadienoyl-CoA = 1'-[1,2-diacyl-sn-glycero-3-phospho],3'-[1-acyl,2-(9Z,12Z)-octadecadienoyl-sn-glycero-3-phospho]-glycerol + CoA. It catalyses the reaction 1'-[1,2-diacyl-sn-glycero-3-phospho],3'-[1-acyl-sn-glycero-3-phospho]-glycerol + dodecanoyl-CoA = 1'-[1,2-diacyl-sn-glycero-3-phospho],3'-[1-acyl,2-dodecanoyl-sn-glycero-3-phospho]-glycerol + CoA. The catalysed reaction is 1',3'-bis-[1-acyl-sn-glycero-3-phospho]-glycerol + dodecanoyl-CoA = 1'-[1-acyl-2-dodecanoyl-sn-glycero-3-phospho],3'-[1-acyl,2-hydroxy-sn-glycero-3-phospho]-glycerol + CoA. It carries out the reaction a 1-acyl-sn-glycero-3-phosphate + (9Z)-octadecenoyl-CoA = a 1-acyl-2-(9Z-octadecenoyl)-sn-glycero-3-phosphate + CoA. The enzyme catalyses 1',3'-bis-[1-acyl-sn-glycero-3-phospho]-glycerol + (9Z,12Z)-octadecadienoyl-CoA = 1'-[1-acyl-2-(9Z,12Z)-octadecadienoyl-sn-glycero-3-phospho],3'-[1-acyl,2-hydroxy-sn-glycero-3-phospho]-glycerol + CoA. It catalyses the reaction 1',3'-bis-[1-acyl-sn-glycero-3-phospho]-glycerol + hexadecanoyl-CoA = 1'-[1-acyl-2-hexadecanoyl-sn-glycero-3-phospho],3'-[1-acyl,2-hydroxy-sn-glycero-3-phospho]-glycerol + CoA. The catalysed reaction is 1',3'-bis-[1-acyl-sn-glycero-3-phospho]-glycerol + octadecanoyl-CoA = 1'-[1-acyl-2-octadecanoyl-sn-glycero-3-phospho],3'-[1-acyl,2-hydroxy-sn-glycero-3-phospho]-glycerol + CoA. It carries out the reaction 1'-[1,2-diacyl-sn-glycero-3-phospho],3'-[1-acyl-sn-glycero-3-phospho]-glycerol + octanoyl-CoA = 1'-[1,2-diacyl-sn-glycero-3-phospho],3'-[1-acyl,2-octanoyl-sn-glycero-3-phospho]-glycerol + CoA. The enzyme catalyses 1',3'-bis-[1-acyl-sn-glycero-3-phospho]-glycerol + octanoyl-CoA = 1'-[1-acyl-2-octanoyl-sn-glycero-3-phospho],3'-[1-acyl,2-hydroxy-sn-glycero-3-phospho]-glycerol + CoA. It catalyses the reaction 1'-[1,2-diacyl-sn-glycero-3-phospho],3'-[1-acyl-sn-glycero-3-phospho]-glycerol + hexadecanoyl-CoA = 1'-[1,2-diacyl-sn-glycero-3-phospho],3'-[1-acyl,2-hexadecanoyl-sn-glycero-3-phospho]-glycerol + CoA. The catalysed reaction is 1'-[1,2-diacyl-sn-glycero-3-phospho],3'-[1-acyl-sn-glycero-3-phospho]-glycerol + (5Z,8Z,11Z,14Z)-eicosatetraenoyl-CoA = 1'-[1,2-diacyl-sn-glycero-3-phospho],3'-[1-acyl,2-(5Z,8Z,11Z,14Z)-eicosatetraenoyl-sn-glycero-3-phospho]-glycerol + CoA. It carries out the reaction 1',3'-bis-[1-acyl-sn-glycero-3-phospho]-glycerol + (5Z,8Z,11Z,14Z)-eicosatetraenoyl-CoA = 1'-[1-acyl-2-(5Z,8Z,11Z,14Z)-eicosatetraenoyl-sn-glycero-3-phospho],3'-[1-acyl,2-hydroxy-sn-glycero-3-phospho]-glycerol + CoA. The enzyme catalyses a 1-acyl-sn-glycero-3-phospho-(1D-myo-inositol) + octadecanoyl-CoA = a 1-acyl-2-octadecanoyl-sn-glycero-3-phospho-(1D-myo-inositol) + CoA. It catalyses the reaction a 2-acyl-sn-glycero-3-phospho-D-myo-inositol + octadecanoyl-CoA = 1-octadecanoyl-2-acyl-sn-glycero-3-phospho-1D-myo-inositol + CoA. Its pathway is phospholipid metabolism; CDP-diacylglycerol biosynthesis; CDP-diacylglycerol from sn-glycerol 3-phosphate: step 2/3. Its function is as follows. Exhibits acyl-CoA:lysocardiolipin acyltransferase (ALCAT) activity; catalyzes the reacylation of lyso-cardiolipin to cardiolipin (CL), a key step in CL remodeling. Recognizes both monolysocardiolipin and dilysocardiolipin as substrates with a preference for linoleoyl-CoA and oleoyl-CoA as acyl donors. Also exhibits 1-acyl-sn-glycerol-3-phosphate acyltransferase activity (AGPAT) activity; converts 1-acyl-sn-glycerol-3- phosphate (lysophosphatidic acid or LPA) into 1,2-diacyl-sn-glycerol-3- phosphate (phosphatidic acid or PA) by incorporating an acyl moiety at the sn-2 position of the glycerol backbone. Possesses lysophosphatidylinositol acyltransferase (LPIAT) activity. Possesses lysophosphatidylglycerol acyltransferase (LPGAT) activity. Required for establishment of the hematopoietic and endothelial lineages. The protein is Lysocardiolipin acyltransferase 1 (Lclat1) of Mus musculus (Mouse).